An 82-amino-acid chain; its full sequence is RNA-binding protein BPUM_0095 (82 aa).

It belongs to the eukaryotic ribosomal protein eL8 family.

The protein is RNA-binding protein BPUM_0095 of Bacillus pumilus (strain SAFR-032).